Here is a 510-residue protein sequence, read N- to C-terminus: MIWHVQNENFILDSTRIFMKAFHLLLFDGSLIVPECILIFGLILLLMIDSTSDQKDIPWLYFISSTSLVMSITALLFRWREEPVISFSGNFQTNNFNEIFQFLILLCSTLCIPLSVEYIECTEMAITEFLLFVLTATLGGMFLCGANDLITIFVAPECFSLCSYLLSGYTKKDVRSNEATMKYLLMGGASSSILVHGFSWLYGSSGGEIELQEIVNGLINTQMYNSPGISIALIFITVGIGFKLSPAPSHQWTPDVYEGSPTPVVAFLSVTSKVAASASATRIFDIPFYFSSNEWHLLLETLAILSMILGNLIAITQTSMKRMLAYSSIGQIGYVIIGIIVGDSNDGYASMITYMLFYISMNLGTFACIVLFGLRTGTDNIRDYAGLYTKDPFLALSLALCLLSLGGLPPLAGFFGKLYLFWCGWQAGLYFLVLIGLLTSVVSIYYYLKIIKLLMTGRTQEITPHVRNYRRSPFRSNNSIELSMIVCVIASTIPGISMNPIIAIAQDTLF.

A run of 13 helical transmembrane segments spans residues 24–44, 57–77, 99–119, 124–144, 149–169, 183–203, 227–247, 295–315, 323–343, 354–374, 395–415, 418–438, and 484–504; these read LLLF…GLIL, IPWL…ALLF, IFQF…VEYI, MAIT…MFLC, LITI…LSGY, YLLM…WLYG, PGIS…LSPA, WHLL…LIAI, MLAY…IVGD, YMLF…LFGL, ALSL…AGFF, LYLF…IGLL, and MIVC…IIAI.

This sequence belongs to the complex I subunit 2 family. NDH is composed of at least 16 different subunits, 5 of which are encoded in the nucleus.

It is found in the plastid. Its subcellular location is the chloroplast thylakoid membrane. It carries out the reaction a plastoquinone + NADH + (n+1) H(+)(in) = a plastoquinol + NAD(+) + n H(+)(out). It catalyses the reaction a plastoquinone + NADPH + (n+1) H(+)(in) = a plastoquinol + NADP(+) + n H(+)(out). NDH shuttles electrons from NAD(P)H:plastoquinone, via FMN and iron-sulfur (Fe-S) centers, to quinones in the photosynthetic chain and possibly in a chloroplast respiratory chain. The immediate electron acceptor for the enzyme in this species is believed to be plastoquinone. Couples the redox reaction to proton translocation, and thus conserves the redox energy in a proton gradient. The sequence is that of NAD(P)H-quinone oxidoreductase subunit 2 B, chloroplastic from Daucus carota (Wild carrot).